The primary structure comprises 428 residues: D-amino acid dehydrogenase (428 aa).

An FAD-binding site is contributed by 3–17 (VVVLGSGVVGVTSAY).

It belongs to the DadA oxidoreductase family. The cofactor is FAD.

It carries out the reaction a D-alpha-amino acid + A + H2O = a 2-oxocarboxylate + AH2 + NH4(+). It functions in the pathway amino-acid degradation; D-alanine degradation; NH(3) and pyruvate from D-alanine: step 1/1. In terms of biological role, oxidative deamination of D-amino acids. This is D-amino acid dehydrogenase from Paraburkholderia phymatum (strain DSM 17167 / CIP 108236 / LMG 21445 / STM815) (Burkholderia phymatum).